Consider the following 448-residue polypeptide: Homogentisate 1,2-dioxygenase (448 aa).

His-303 acts as the Proton acceptor in catalysis. The Fe cation site is built by His-346 and Glu-352. Homogentisate-binding residues include Tyr-361 and His-382. Fe cation is bound at residue His-382.

The protein belongs to the homogentisate dioxygenase family. In terms of assembly, hexamer; dimer of trimers. Requires Fe cation as cofactor.

It catalyses the reaction homogentisate + O2 = 4-maleylacetoacetate + H(+). It functions in the pathway amino-acid degradation; L-phenylalanine degradation; acetoacetate and fumarate from L-phenylalanine: step 4/6. In terms of biological role, involved in the catabolism of homogentisate (2,5-dihydroxyphenylacetate or 2,5-OH-PhAc), a central intermediate in the degradation of phenylalanine and tyrosine. Catalyzes the oxidative ring cleavage of the aromatic ring of homogentisate to yield maleylacetoacetate. This is Homogentisate 1,2-dioxygenase from Rhodopseudomonas palustris (strain BisB5).